A 164-amino-acid chain; its full sequence is UPF0114 protein Sbal223_3668 (164 aa).

A run of 4 helical transmembrane segments spans residues 15–35, 53–73, 108–128, and 136–156; these read IMAPIYLGLSLVLIGLGIKFF, LVLVTLSLIDITLVGGLIVMV, KVAASIVAISSIHLLKIFMDV, and IMWYLLIHITFVLSAFAMGYL.

The protein belongs to the UPF0114 family.

It localises to the cell membrane. This Shewanella baltica (strain OS223) protein is UPF0114 protein Sbal223_3668.